The chain runs to 85 residues: Small ribosomal subunit protein bS20 (85 aa).

Disordered stretches follow at residues 1–25 and 62–85; these read MANI…ASIK and ARKG…QVNA.

This sequence belongs to the bacterial ribosomal protein bS20 family.

Its function is as follows. Binds directly to 16S ribosomal RNA. This chain is Small ribosomal subunit protein bS20, found in Bacillus cereus (strain G9842).